Reading from the N-terminus, the 261-residue chain is tRNA pseudouridine synthase A (261 aa).

Catalysis depends on aspartate 51, which acts as the Nucleophile. Residue tyrosine 109 participates in substrate binding.

It belongs to the tRNA pseudouridine synthase TruA family. In terms of assembly, homodimer.

The catalysed reaction is uridine(38/39/40) in tRNA = pseudouridine(38/39/40) in tRNA. In terms of biological role, formation of pseudouridine at positions 38, 39 and 40 in the anticodon stem and loop of transfer RNAs. The sequence is that of tRNA pseudouridine synthase A from Psychromonas ingrahamii (strain DSM 17664 / CCUG 51855 / 37).